Reading from the N-terminus, the 527-residue chain is Bifunctional purine biosynthesis protein PurH (527 aa).

Residues A8–V156 enclose the MGS-like domain.

It belongs to the PurH family.

The catalysed reaction is (6R)-10-formyltetrahydrofolate + 5-amino-1-(5-phospho-beta-D-ribosyl)imidazole-4-carboxamide = 5-formamido-1-(5-phospho-D-ribosyl)imidazole-4-carboxamide + (6S)-5,6,7,8-tetrahydrofolate. It catalyses the reaction IMP + H2O = 5-formamido-1-(5-phospho-D-ribosyl)imidazole-4-carboxamide. It functions in the pathway purine metabolism; IMP biosynthesis via de novo pathway; 5-formamido-1-(5-phospho-D-ribosyl)imidazole-4-carboxamide from 5-amino-1-(5-phospho-D-ribosyl)imidazole-4-carboxamide (10-formyl THF route): step 1/1. It participates in purine metabolism; IMP biosynthesis via de novo pathway; IMP from 5-formamido-1-(5-phospho-D-ribosyl)imidazole-4-carboxamide: step 1/1. The polypeptide is Bifunctional purine biosynthesis protein PurH (Mycobacterium sp. (strain JLS)).